The following is a 219-amino-acid chain: Large ribosomal subunit protein uL3 (219 aa).

Disordered regions lie at residues D62–G81 and Q136–M156.

The protein belongs to the universal ribosomal protein uL3 family. Part of the 50S ribosomal subunit. Forms a cluster with proteins L14 and L19.

Its function is as follows. One of the primary rRNA binding proteins, it binds directly near the 3'-end of the 23S rRNA, where it nucleates assembly of the 50S subunit. The protein is Large ribosomal subunit protein uL3 of Staphylococcus saprophyticus subsp. saprophyticus (strain ATCC 15305 / DSM 20229 / NCIMB 8711 / NCTC 7292 / S-41).